Here is a 335-residue protein sequence, read N- to C-terminus: Fructose-1,6-bisphosphatase class 1 (335 aa).

Mg(2+)-binding residues include Glu90, Asp113, Leu115, and Asp116. Substrate-binding positions include 116 to 119 (DGSS), Asn209, Tyr242, and Lys272. Glu278 is a binding site for Mg(2+).

Belongs to the FBPase class 1 family. In terms of assembly, homotetramer. The cofactor is Mg(2+).

The protein localises to the cytoplasm. It catalyses the reaction beta-D-fructose 1,6-bisphosphate + H2O = beta-D-fructose 6-phosphate + phosphate. It participates in carbohydrate biosynthesis; gluconeogenesis. In Histophilus somni (strain 2336) (Haemophilus somnus), this protein is Fructose-1,6-bisphosphatase class 1.